A 228-amino-acid polypeptide reads, in one-letter code: 7-cyano-7-deazaguanine synthase (228 aa).

An ATP-binding site is contributed by 11–21; the sequence is LSGGLDSATVL. Residues Cys191, Cys201, Cys204, and Cys207 each contribute to the Zn(2+) site.

This sequence belongs to the QueC family. It depends on Zn(2+) as a cofactor.

It carries out the reaction 7-carboxy-7-deazaguanine + NH4(+) + ATP = 7-cyano-7-deazaguanine + ADP + phosphate + H2O + H(+). The protein operates within purine metabolism; 7-cyano-7-deazaguanine biosynthesis. Functionally, catalyzes the ATP-dependent conversion of 7-carboxy-7-deazaguanine (CDG) to 7-cyano-7-deazaguanine (preQ(0)). The chain is 7-cyano-7-deazaguanine synthase from Magnetococcus marinus (strain ATCC BAA-1437 / JCM 17883 / MC-1).